Reading from the N-terminus, the 319-residue chain is ATP-dependent 6-phosphofructokinase (319 aa).

G11 provides a ligand contact to ATP. 21–25 (RAVVR) provides a ligand contact to ADP. ATP is bound by residues 72 to 73 (RC) and 102 to 105 (GDGS). D103 is a binding site for Mg(2+). 125 to 127 (TID) serves as a coordination point for substrate. D127 (proton acceptor) is an active-site residue. R154 provides a ligand contact to ADP. Substrate-binding positions include R162 and 169–171 (MGR). Residues 185–187 (GAE), R211, and 213–215 (KKH) each bind ADP. Residues E222, R243, and 249–252 (HVQR) contribute to the substrate site.

The protein belongs to the phosphofructokinase type A (PFKA) family. ATP-dependent PFK group I subfamily. Prokaryotic clade 'B1' sub-subfamily. Homotetramer. Mg(2+) serves as cofactor.

The protein localises to the cytoplasm. It carries out the reaction beta-D-fructose 6-phosphate + ATP = beta-D-fructose 1,6-bisphosphate + ADP + H(+). Its pathway is carbohydrate degradation; glycolysis; D-glyceraldehyde 3-phosphate and glycerone phosphate from D-glucose: step 3/4. With respect to regulation, allosterically activated by ADP and other diphosphonucleosides, and allosterically inhibited by phosphoenolpyruvate. Catalyzes the phosphorylation of D-fructose 6-phosphate to fructose 1,6-bisphosphate by ATP, the first committing step of glycolysis. This is ATP-dependent 6-phosphofructokinase from Bacillus mycoides (strain KBAB4) (Bacillus weihenstephanensis).